Reading from the N-terminus, the 72-residue chain is Omega-conotoxin-like SVIA mutant 1 (72 aa).

An N-terminal signal peptide occupies residues 1-22 (MKLTCVVIVAVLLLTACQLITA). Positions 23–48 (EDSRGAQKHRTLRSTARRSKSELTTR) are excised as a propeptide. 3 cysteine pairs are disulfide-bonded: Cys-49/Cys-63, Cys-56/Cys-66, and Cys-62/Cys-71. Pro-55 carries the 4-hydroxyproline modification.

Belongs to the conotoxin O1 superfamily. In terms of tissue distribution, expressed by the venom duct.

It localises to the secreted. Omega-conotoxins act at presynaptic membranes, they bind and block voltage-gated calcium channels (Cav). This Conus striatus (Striated cone) protein is Omega-conotoxin-like SVIA mutant 1.